The chain runs to 213 residues: Probable thiopurine S-methyltransferase (213 aa).

4 residues coordinate S-adenosyl-L-methionine: tryptophan 10, leucine 45, glutamate 66, and arginine 125.

This sequence belongs to the class I-like SAM-binding methyltransferase superfamily. TPMT family.

It is found in the cytoplasm. It carries out the reaction S-adenosyl-L-methionine + a thiopurine = S-adenosyl-L-homocysteine + a thiopurine S-methylether.. This is Probable thiopurine S-methyltransferase from Yarrowia lipolytica (strain CLIB 122 / E 150) (Yeast).